The following is a 296-amino-acid chain: Putative peptide transport system permease protein BRA1093/BS1330_II1085 (296 aa).

6 helical membrane passes run 35–55, 97–117, 131–151, 205–225, 229–249, and 260–280; these read IGLV…WITN, LWIG…IGIA, VMDA…SAAL, ILPN…AYAI, ATLS…GSIV, and WWIM…INLI. The region spanning 97-281 is the ABC transmembrane type-1 domain; that stretch reads LWIGLTVAVL…ISALAINLIG (185 aa).

This sequence belongs to the binding-protein-dependent transport system permease family. The complex is composed of two ATP-binding proteins (BRA1094), two transmembrane proteins (BRA1092 and BRA1093) and a solute-binding protein (BRA1090).

It localises to the cell inner membrane. Its function is as follows. Probably part of an ABC transporter complex that could be involved in peptide import. Probably responsible for the translocation of the substrate across the membrane. This chain is Putative peptide transport system permease protein BRA1093/BS1330_II1085, found in Brucella suis biovar 1 (strain 1330).